Reading from the N-terminus, the 475-residue chain is Putative aldehyde dehydrogenase (475 aa).

NAD(+) is bound by residues tryptophan 146 to asparagine 147 and glycine 223 to serine 224. The active-site Proton acceptor is the glutamate 245. Leucine 246 is a binding site for NAD(+). The active-site Nucleophile is cysteine 279. Glutamate 379 contributes to the NAD(+) binding site.

This sequence belongs to the aldehyde dehydrogenase family.

The catalysed reaction is an aldehyde + NAD(+) + H2O = a carboxylate + NADH + 2 H(+). This chain is Putative aldehyde dehydrogenase, found in Staphylococcus aureus (strain MSSA476).